Here is a 332-residue protein sequence, read N- to C-terminus: Probable thc operon regulatory protein (332 aa).

The HTH araC/xylS-type domain maps to 227 to 328 (RLAVDYLEAH…GVSPSEDLRT (102 aa)). 2 DNA-binding regions (H-T-H motif) span residues 244–265 (AQVARNVGVSVRSLQVGFQNSL) and 295–318 (VTEIAQRWGFLHVGRFAGEYKQTF).

In terms of biological role, probably involved in the positive regulation of the thc operon for the degradation of the thiocarbamate herbicide EPTC. This Rhodococcus erythropolis (Arthrobacter picolinophilus) protein is Probable thc operon regulatory protein (thcR).